The following is a 103-amino-acid chain: Small ribosomal subunit protein uS10 (103 aa).

The protein belongs to the universal ribosomal protein uS10 family. As to quaternary structure, part of the 30S ribosomal subunit.

In terms of biological role, involved in the binding of tRNA to the ribosomes. The protein is Small ribosomal subunit protein uS10 of Xanthomonas campestris pv. campestris (strain B100).